The following is a 201-amino-acid chain: Aminoglycoside N(6')-acetyltransferase type 1 (201 aa).

The N-acetyltransferase domain maps to 25–192 (VTLRLMTEHD…PAVYMVQTRQ (168 aa)). Substrate-binding residues include W51 and D154. N159 provides a ligand contact to acetyl-CoA.

As to quaternary structure, homodimer.

It carries out the reaction kanamycin B + acetyl-CoA = N(6')-acetylkanamycin B + CoA + H(+). Its function is as follows. Catalyzes the transfer of an acetyl group from acetyl-CoA to the 6'-amino group of aminoglycoside molecules conferring resistance to antibiotics containing the purpurosamine ring including amikacin. The protein is Aminoglycoside N(6')-acetyltransferase type 1 (aacA4) of Klebsiella pneumoniae.